The sequence spans 344 residues: tRNA N6-adenosine threonylcarbamoyltransferase (344 aa).

Fe cation is bound by residues His-110 and His-114. Residues 133–137, Asp-166, Gly-179, and Asn-278 contribute to the substrate site; that span reads VVSGA. Residue Asp-303 coordinates Fe cation.

Belongs to the KAE1 / TsaD family. The cofactor is Fe(2+).

Its subcellular location is the cytoplasm. It carries out the reaction L-threonylcarbamoyladenylate + adenosine(37) in tRNA = N(6)-L-threonylcarbamoyladenosine(37) in tRNA + AMP + H(+). Functionally, required for the formation of a threonylcarbamoyl group on adenosine at position 37 (t(6)A37) in tRNAs that read codons beginning with adenine. Is involved in the transfer of the threonylcarbamoyl moiety of threonylcarbamoyl-AMP (TC-AMP) to the N6 group of A37, together with TsaE and TsaB. TsaD likely plays a direct catalytic role in this reaction. The polypeptide is tRNA N6-adenosine threonylcarbamoyltransferase (Chlamydia pneumoniae (Chlamydophila pneumoniae)).